A 281-amino-acid polypeptide reads, in one-letter code: Pantothenate synthetase (281 aa).

31 to 38 provides a ligand contact to ATP; it reads MGNLHAGH. The active-site Proton donor is H38. Q62 lines the (R)-pantoate pocket. Q62 contributes to the beta-alanine binding site. Position 150–153 (150–153) interacts with ATP; that stretch reads GKKD. A (R)-pantoate-binding site is contributed by Q156. Residues V179 and 187-190 contribute to the ATP site; that span reads MSSR.

This sequence belongs to the pantothenate synthetase family. In terms of assembly, homodimer.

Its subcellular location is the cytoplasm. It catalyses the reaction (R)-pantoate + beta-alanine + ATP = (R)-pantothenate + AMP + diphosphate + H(+). It participates in cofactor biosynthesis; (R)-pantothenate biosynthesis; (R)-pantothenate from (R)-pantoate and beta-alanine: step 1/1. Functionally, catalyzes the condensation of pantoate with beta-alanine in an ATP-dependent reaction via a pantoyl-adenylate intermediate. This is Pantothenate synthetase from Xylella fastidiosa (strain M23).